Reading from the N-terminus, the 391-residue chain is Beta sliding clamp (391 aa).

Belongs to the beta sliding clamp family. As to quaternary structure, forms a ring-shaped head-to-tail homodimer around DNA which binds and tethers DNA polymerases and other proteins to the DNA. The DNA replisome complex has a single clamp-loading complex (3 tau and 1 each of delta, delta', psi and chi subunits) which binds 3 Pol III cores (1 core on the leading strand and 2 on the lagging strand) each with a beta sliding clamp dimer. Additional proteins in the replisome are other copies of gamma, psi and chi, Ssb, DNA helicase and RNA primase.

The protein resides in the cytoplasm. In terms of biological role, confers DNA tethering and processivity to DNA polymerases and other proteins. Acts as a clamp, forming a ring around DNA (a reaction catalyzed by the clamp-loading complex) which diffuses in an ATP-independent manner freely and bidirectionally along dsDNA. Initially characterized for its ability to contact the catalytic subunit of DNA polymerase III (Pol III), a complex, multichain enzyme responsible for most of the replicative synthesis in bacteria; Pol III exhibits 3'-5' exonuclease proofreading activity. The beta chain is required for initiation of replication as well as for processivity of DNA replication. The protein is Beta sliding clamp (dnaN) of Synechocystis sp. (strain ATCC 27184 / PCC 6803 / Kazusa).